Reading from the N-terminus, the 423-residue chain is Chitinase 1 (423 aa).

The N-terminal stretch at 1 to 22 (MLSFVKKSIALVAALQAVTALA) is a signal peptide. Positions 23 to 34 (TPISSEAGVEKR) are excised as a propeptide. The 364-residue stretch at 38–401 (FANAVYFTNW…STSHQGLGSQ (364 aa)) folds into the GH18 domain. Chitin-binding positions include 102-103 (GT) and 129-132 (GGWT). Glu171 (proton donor) is an active-site residue. Chitin contacts are provided by residues Tyr172, 237 to 240 (MAYD), and Trp378.

Belongs to the glycosyl hydrolase 18 family. Chitinase class V subfamily.

The protein localises to the secreted. It carries out the reaction Random endo-hydrolysis of N-acetyl-beta-D-glucosaminide (1-&gt;4)-beta-linkages in chitin and chitodextrins.. The chain is Chitinase 1 (CHI1) from Aphanocladium album (Wheat rust fungus).